A 177-amino-acid chain; its full sequence is O-acetyl-ADP-ribose deacetylase (177 aa).

The Macro domain occupies 1 to 175 (MKTRIHVVQG…LYERLLTQQG (175 aa)). Substrate contacts are provided by residues 11–12 (DI), asparagine 25, 33–35 (GVD), and 122–126 (STGVY). The active-site Proton acceptor is aspartate 35.

The protein belongs to the MacroD-type family. YmdB subfamily. As to quaternary structure, homodimer. Interacts with RNase III.

The catalysed reaction is 3''-O-acetyl-ADP-D-ribose + H2O = ADP-D-ribose + acetate + H(+). The enzyme catalyses 2''-O-acetyl-ADP-D-ribose + H2O = ADP-D-ribose + acetate + H(+). In terms of biological role, deacetylates O-acetyl-ADP ribose to yield ADP-ribose and free acetate. Down-regulates ribonuclease 3 (RNase III) activity. Acts by interacting directly with the region of the ribonuclease that is required for dimerization/activation. This is O-acetyl-ADP-ribose deacetylase from Shigella dysenteriae serotype 1 (strain Sd197).